A 544-amino-acid chain; its full sequence is CTP synthase (544 aa).

Positions 1 to 266 (MATNYIFVTG…DDFVCDRFRL (266 aa)) are amidoligase domain. CTP is bound at residue Ser-14. Ser-14 is a binding site for UTP. Residues 15 to 20 (SLGKGI) and Asp-72 contribute to the ATP site. Mg(2+) contacts are provided by Asp-72 and Glu-140. Residues 147–149 (DIE), 187–192 (KTKPTQ), and Lys-223 each bind CTP. Residues 187–192 (KTKPTQ) and Lys-223 contribute to the UTP site. 239 to 241 (KDV) is a binding site for ATP. Positions 291–542 (TIGMVGKYVE…VKAAKEHQGK (252 aa)) constitute a Glutamine amidotransferase type-1 domain. An L-glutamine-binding site is contributed by Gly-352. Cys-379 (nucleophile; for glutamine hydrolysis) is an active-site residue. L-glutamine-binding positions include 380-383 (LGMQ), Glu-403, and Arg-470. Residues His-515 and Glu-517 contribute to the active site.

The protein belongs to the CTP synthase family. Homotetramer.

It catalyses the reaction UTP + L-glutamine + ATP + H2O = CTP + L-glutamate + ADP + phosphate + 2 H(+). The catalysed reaction is L-glutamine + H2O = L-glutamate + NH4(+). The enzyme catalyses UTP + NH4(+) + ATP = CTP + ADP + phosphate + 2 H(+). The protein operates within pyrimidine metabolism; CTP biosynthesis via de novo pathway; CTP from UDP: step 2/2. Its activity is regulated as follows. Allosterically activated by GTP, when glutamine is the substrate; GTP has no effect on the reaction when ammonia is the substrate. The allosteric effector GTP functions by stabilizing the protein conformation that binds the tetrahedral intermediate(s) formed during glutamine hydrolysis. Inhibited by the product CTP, via allosteric rather than competitive inhibition. Functionally, catalyzes the ATP-dependent amination of UTP to CTP with either L-glutamine or ammonia as the source of nitrogen. Regulates intracellular CTP levels through interactions with the four ribonucleotide triphosphates. In Glaesserella parasuis serovar 5 (strain SH0165) (Haemophilus parasuis), this protein is CTP synthase.